The following is a 530-amino-acid chain: Developmental and secondary metabolism regulator VEL1 (530 aa).

A Velvet domain is found at 26-220; the sequence is NRSLWYQMTV…ADQGCQVRIR (195 aa). The Nuclear localization signal motif lies at 40-45; sequence ERARAC. A disordered region spans residues 206 to 516; it reads LSKTVADQGC…HDQGWYSRAD (311 aa). A compositionally biased stretch (basic and acidic residues) spans 244–253; the sequence is FERREEDFGR. Positions 295 to 305 are enriched in pro residues; that stretch reads YPPPPPPPSYE. The segment covering 347–356 has biased composition (polar residues); it reads YAPTAQSPYS. The segment covering 380–389 has biased composition (basic and acidic residues); that stretch reads VKHDLYDRRQ. The span at 390–404 shows a compositional bias: low complexity; it reads STSSYVPPSPSVYST. The span at 415 to 426 shows a compositional bias: pro residues; sequence SYPPTPVAAPRP. A PEST region spans residues 429–460; that stretch reads MHSQTSLPALKIDQLVSPVSPLPPIEPQTGPA. Positions 478–490 are enriched in polar residues; that stretch reads FAQSTRPLHNGQR.

Belongs to the velvet family. VeA subfamily. As to quaternary structure, component of the heterotrimeric velvet complex composed of LAE1, VEL1 and VEL2; VEL1 acting as a bridging protein between LAE1 and VEL2. Interacts with LAE1.

It localises to the nucleus. Its subcellular location is the cytoplasm. In terms of biological role, component of the velvet transcription factor complex that controls sexual/asexual developmental ratio in response to light, promoting sexual development in the darkness while stimulating asexual sporulation under illumination. The velvet complex hat acts as a global regulator for secondary metabolite gene expression. Controls positively the expression of the gibberellins, fumonisins and fusarin C gene clusters. Controls the expression of the fusaric acid gene cluster. Controls negatively the expression of the bikaverin gene cluster. Regulates the expression of laeA. Plays a crucial role in virulence. This Gibberella fujikuroi (strain CBS 195.34 / IMI 58289 / NRRL A-6831) (Bakanae and foot rot disease fungus) protein is Developmental and secondary metabolism regulator VEL1.